The following is a 492-amino-acid chain: GTPase Der (492 aa).

EngA-type G domains follow at residues 3–167 (FTLA…DAYA) and 201–381 (LQVA…EVWN). Residues 9-16 (GRPNVGKS), 56-60 (DTAGL), 119-122 (NKAE), 207-214 (GRPNAGKS), 259-263 (DTAGM), and 324-327 (NKWD) contribute to the GTP site. Residues 382 to 468 (RRVTTAQLNR…RLWMRGQNDA (87 aa)) form the KH-like domain. Positions 462-492 (MRGQNDANPYKGRKKAPPSKLRKHTDGRRKD) are disordered. Over residues 472–492 (KGRKKAPPSKLRKHTDGRRKD) the composition is skewed to basic residues.

The protein belongs to the TRAFAC class TrmE-Era-EngA-EngB-Septin-like GTPase superfamily. EngA (Der) GTPase family. As to quaternary structure, associates with the 50S ribosomal subunit.

Its function is as follows. GTPase that plays an essential role in the late steps of ribosome biogenesis. The polypeptide is GTPase Der (Roseobacter denitrificans (strain ATCC 33942 / OCh 114) (Erythrobacter sp. (strain OCh 114))).